Consider the following 298-residue polypeptide: Glycine--tRNA ligase alpha subunit (298 aa).

This sequence belongs to the class-II aminoacyl-tRNA synthetase family. In terms of assembly, tetramer of two alpha and two beta subunits.

The protein localises to the cytoplasm. It carries out the reaction tRNA(Gly) + glycine + ATP = glycyl-tRNA(Gly) + AMP + diphosphate. This chain is Glycine--tRNA ligase alpha subunit, found in Helicobacter acinonychis (strain Sheeba).